A 121-amino-acid chain; its full sequence is Large ribosomal subunit protein bL19 (121 aa).

This sequence belongs to the bacterial ribosomal protein bL19 family.

Functionally, this protein is located at the 30S-50S ribosomal subunit interface and may play a role in the structure and function of the aminoacyl-tRNA binding site. The sequence is that of Large ribosomal subunit protein bL19 from Chlorobaculum tepidum (strain ATCC 49652 / DSM 12025 / NBRC 103806 / TLS) (Chlorobium tepidum).